The following is a 1207-amino-acid chain: DNA-directed RNA polymerase subunit beta' (1207 aa).

Residues Cys60, Cys62, Cys75, and Cys78 each coordinate Zn(2+). Positions 450, 452, and 454 each coordinate Mg(2+). 4 residues coordinate Zn(2+): Cys818, Cys892, Cys899, and Cys902.

The protein belongs to the RNA polymerase beta' chain family. The RNAP catalytic core consists of 2 alpha, 1 beta, 1 beta' and 1 omega subunit. When a sigma factor is associated with the core the holoenzyme is formed, which can initiate transcription. It depends on Mg(2+) as a cofactor. The cofactor is Zn(2+).

It carries out the reaction RNA(n) + a ribonucleoside 5'-triphosphate = RNA(n+1) + diphosphate. Its function is as follows. DNA-dependent RNA polymerase catalyzes the transcription of DNA into RNA using the four ribonucleoside triphosphates as substrates. The sequence is that of DNA-directed RNA polymerase subunit beta' from Lactococcus lactis subsp. lactis (strain IL1403) (Streptococcus lactis).